Here is a 556-residue protein sequence, read N- to C-terminus: Formate--tetrahydrofolate ligase (556 aa).

Position 65–72 (65–72) interacts with ATP; the sequence is TPAGEGKS.

It belongs to the formate--tetrahydrofolate ligase family.

It carries out the reaction (6S)-5,6,7,8-tetrahydrofolate + formate + ATP = (6R)-10-formyltetrahydrofolate + ADP + phosphate. The protein operates within one-carbon metabolism; tetrahydrofolate interconversion. This is Formate--tetrahydrofolate ligase from Streptococcus pneumoniae (strain 70585).